We begin with the raw amino-acid sequence, 301 residues long: Rhodopsin (301 aa).

Topologically, residues 1–18 (LHMIHLHWYQYPPMNPMM) are extracellular. A helical membrane pass occupies residues 19–43 (YPLLLIFMLFTGILCLAGNFVTIWV). Topologically, residues 44–55 (FMNTKSLRTPAN) are cytoplasmic. Residues 56–78 (LLVVNLAMSDFLMMFTMFPPMMV) traverse the membrane as a helical segment. Residues 79–92 (TCYYHTWTLGPTFC) are Extracellular-facing. A disulfide bond links Cys-92 and Cys-169. The chain crosses the membrane as a helical span at residues 93–115 (QVYAFLGNLCGCASIWTMVFITF). The 'Ionic lock' involved in activated form stabilization motif lies at 116–118 (DRY). Residues 116–134 (DRYNVIVKGVAGEPLSTKK) are Cytoplasmic-facing. Residues 135 to 155 (ASLWILSVWVLSTAWCIAPFF) form a helical membrane-spanning segment. The Extracellular segment spans residues 156–182 (GWNHYVPEGNLTGCGTDYLSEDILSRS). Asn-165 carries N-linked (GlcNAc...) asparagine glycosylation. Residues 183–204 (YLYIYSTWVYFLPLAITIYCYV) traverse the membrane as a helical segment. At 205 to 245 (FIIKAVAAHEKGMRDQAKKMGIKSLRNEEAQKTSAECRLAK) the chain is on the cytoplasmic side. Residues 246 to 267 (NAMTTVALWFIAWTPCLLINWV) traverse the membrane as a helical segment. Residues 268 to 278 (GMFARSYLSPV) are Extracellular-facing. The chain crosses the membrane as a helical span at residues 279–300 (YTIWGYVFAKANAVYNPIVYAI). At Lys-288 the chain carries N6-(retinylidene)lysine.

Belongs to the G-protein coupled receptor 1 family. Opsin subfamily. Homodimer. Interacts with GNAQ. Post-translationally, contains one covalently linked retinal chromophore.

Its subcellular location is the cell projection. It localises to the rhabdomere membrane. Its function is as follows. Photoreceptor required for image-forming vision at low light intensity. Can use both retinal and 3-dehydroretinal as visual pigment. Light-induced isomerization of 11-cis to all-trans retinal triggers a conformational change that activates signaling via G-proteins. Signaling via GNAQ probably mediates the activation of phospholipase C. In Cambarus hubrichti (Salem cave crayfish), this protein is Rhodopsin (RHO).